We begin with the raw amino-acid sequence, 152 residues long: MSKPIAENRRARFDYFIEETFEAGIMLTGTEVKSLRTGRANIAESYASVEGREIVLINADIPPYGHANRFNHEPRRHRKLLLHRRQIDKLIGAVQREGRTLVPIKLYWNDKGLAKLEVGLAKGKKLHDKRDTAAERDWQRDKARLMKGDRGD.

The segment at 124–152 is disordered; it reads KKLHDKRDTAAERDWQRDKARLMKGDRGD. Positions 128-152 are enriched in basic and acidic residues; it reads DKRDTAAERDWQRDKARLMKGDRGD.

It belongs to the SmpB family.

The protein localises to the cytoplasm. Required for rescue of stalled ribosomes mediated by trans-translation. Binds to transfer-messenger RNA (tmRNA), required for stable association of tmRNA with ribosomes. tmRNA and SmpB together mimic tRNA shape, replacing the anticodon stem-loop with SmpB. tmRNA is encoded by the ssrA gene; the 2 termini fold to resemble tRNA(Ala) and it encodes a 'tag peptide', a short internal open reading frame. During trans-translation Ala-aminoacylated tmRNA acts like a tRNA, entering the A-site of stalled ribosomes, displacing the stalled mRNA. The ribosome then switches to translate the ORF on the tmRNA; the nascent peptide is terminated with the 'tag peptide' encoded by the tmRNA and targeted for degradation. The ribosome is freed to recommence translation, which seems to be the essential function of trans-translation. The protein is SsrA-binding protein of Caulobacter vibrioides (strain ATCC 19089 / CIP 103742 / CB 15) (Caulobacter crescentus).